A 3387-amino-acid polypeptide reads, in one-letter code: Genome polyprotein (3387 aa).

The Cytoplasmic segment spans residues 1 to 100 (MNQRKKVVRP…LNILNGRKRS (100 aa)). The hydrophobic; homodimerization of capsid protein C stretch occupies residues 36-71 (LFSGKGPLRMVLAFITFLRVLSIPPTAGILKRWGQL). The propeptide at 100–113 (STVTLLCLIPTVMA) is ER anchor for the capsid protein C, removed in mature form by serine protease NS3. A helical transmembrane segment spans residues 101–117 (TVTLLCLIPTVMAFHLS). Topologically, residues 118–237 (TRDGEPLMIV…GAWKHAQRVE (120 aa)) are extracellular. The N-linked (GlcNAc...) asparagine; by host glycan is linked to Asn-182. A helical membrane pass occupies residues 238–258 (SWILRNPGFALLAGFMAYMIG). Topologically, residues 259–265 (QTGIQRT) are cytoplasmic. Residues 266-279 (VFFVLMMLVAPSYG) traverse the membrane as a helical segment. Residues 280–725 (MRCIGVGNRD…HQVFGSVYTT (446 aa)) are Extracellular-facing. 4 disulfides stabilise this stretch: Cys-282/Cys-309, Cys-339/Cys-400, Cys-353/Cys-384, and Cys-371/Cys-395. Asn-346 is a glycosylation site (N-linked (GlcNAc...) asparagine; by host). The segment at 377 to 390 (DRGWGNGCGLFGKG) is fusion peptide. A glycan (N-linked (GlcNAc...) asparagine; by host) is linked at Asn-432. 2 cysteine pairs are disulfide-bonded: Cys-464–Cys-564 and Cys-581–Cys-612. Residues 726–746 (MFGGVSWMVRILIGLLVLWIG) traverse the membrane as a helical segment. The Cytoplasmic segment spans residues 747–751 (TNSRN). The helical transmembrane segment at 752 to 772 (TPMAMTCIAVGGITLFLGFTV) threads the bilayer. At 773-1193 (QADMGCVVSW…IMLGDTMLSR (421 aa)) the chain is on the extracellular side. 6 disulfide bridges follow: Cys-778–Cys-789, Cys-829–Cys-917, Cys-953–Cys-997, Cys-1054–Cys-1103, Cys-1065–Cys-1087, and Cys-1086–Cys-1090. Asn-904 and Asn-981 each carry an N-linked (GlcNAc...) asparagine; by host glycan. Residues 1194–1218 (VGGQTHLAIMIVFKMSPGYVLGVFL) form a helical membrane-spanning segment. Topologically, residues 1219 to 1224 (RKLTSR) are lumenal. Residues 1225-1243 (ETALMVIGMAMTTVFSIPH) form a helical membrane-spanning segment. The Cytoplasmic segment spans residues 1244-1267 (DLMELIDGISLGLILLKMVTHFDN). A helical transmembrane segment spans residues 1268 to 1288 (TQVGTLALSLTFIRSTMPLTM). Position 1289 (Ala-1289) is a topological domain, lumenal. Residues 1290 to 1308 (WRTIMAVLFAVTLIPLCRT) form a helical membrane-spanning segment. The Lumenal portion of the chain corresponds to 1309–1316 (SCLQKQSH). A helical transmembrane segment spans residues 1317-1337 (WVEITAIILGAQALPVYLMTL). The Cytoplasmic portion of the chain corresponds to 1338-1345 (MKGASKRS). The chain crosses the membrane as a helical span at residues 1346–1366 (WPLNEGIMAVGLVSLLGSALL). Topologically, residues 1367 to 1369 (KND) are lumenal. Residues 1370 to 1390 (VPLAGPMVAGGLLLAAYVMSG) form a helical membrane-spanning segment. At 1391–1444 (SSADLSLERAANVQWDEMADITGSSPIIEVKQDEDGSFSIRDVEETNMITLLVK) the chain is on the cytoplasmic side. Residues 1397-1436 (LERAANVQWDEMADITGSSPIIEVKQDEDGSFSIRDVEET) form an interacts with and activates NS3 protease region. An intramembrane region (helical) is located at residues 1445 to 1465 (LALITVSGLYPLAIPITMTLW). Residues 1466–2146 (YMWQVRTQRS…LNELPESLET (681 aa)) are Cytoplasmic-facing. The Peptidase S7 domain maps to 1475 to 1652 (SGALWDVPSP…ERIGEPDYEV (178 aa)). Residues His-1525, Asp-1549, and Ser-1609 each act as charge relay system; for serine protease NS3 activity in the active site. The 157-residue stretch at 1654-1810 (EDIFRKKRLT…QSNSPIEDIE (157 aa)) folds into the Helicase ATP-binding domain. Residues 1658-1661 (RKKR) are important for RNA-binding. An ATP-binding site is contributed by 1667 to 1674 (LHPGAGKT). Positions 1758–1761 (DEAH) match the DEAH box motif. The region spanning 1820–1987 (TGFDWITDYQ…IIPTLFGPER (168 aa)) is the Helicase C-terminal domain. N6-acetyllysine; by host is present on Lys-1862. A helical membrane pass occupies residues 2147–2167 (LMLVALLGAMTAGIFLFFMQG). At 2168-2169 (KG) the chain is on the lumenal side. The segment at residues 2170–2190 (IGKLSVGLIAIAVASGLLWVA) is an intramembrane region (helical). Glu-2191 is a topological domain (lumenal). Residues 2192 to 2212 (IQPQWIAASIILEFFLMVLLI) form a helical membrane-spanning segment. The Cytoplasmic segment spans residues 2213 to 2225 (PEPEKQRTPQDNQ). Residues 2226–2246 (LIYVILAILTIIGLVAANEMG) form a helical membrane-spanning segment. The Lumenal portion of the chain corresponds to 2247–2270 (LIEKTKADFGFYQVKTETTILDVD). Positions 2271–2291 (LRPASAWTLYAVATTILTPML) form an intramembrane region, helical. At 2292-2301 (RHTIENTSAN) the chain is on the lumenal side. N-linked (GlcNAc...) asparagine; by host glycosylation is found at Asn-2297 and Asn-2301. An intramembrane region (helical) is located at residues 2302–2322 (LSLAAIANQAAVLMGLGKGWP). Over 2323 to 2343 (LHRMDLGVPLLAMGCYSQVNP) the chain is Lumenal. Residues 2344 to 2364 (TTLTASLVMLLVHYAIIGPGL) form a helical membrane-spanning segment. Residues 2365-2409 (QAKATREAQKRTAAGIMKNPTVDGITVIDLEPISYDPKFEKQLGQ) lie on the Cytoplasmic side of the membrane. The chain crosses the membrane as a helical span at residues 2410-2430 (VMLLVLCAGQLLLMRTTWAFC). Topologically, residues 2431–2455 (EVLTLATGPVLTLWEGNPGRFWNTT) are lumenal. Residue Asn-2453 is glycosylated (N-linked (GlcNAc...) asparagine; by host). The helical transmembrane segment at 2456–2476 (IAVSTANIFRGSYLAGAGLAF) threads the bilayer. At 2477 to 3387 (SLIKNAQTPR…SALSESEGVL (911 aa)) the chain is on the cytoplasmic side. Positions 2489–2751 (TGTTGETLGE…DVDLGAGTRS (263 aa)) constitute an mRNA cap 0-1 NS5-type MT domain. An S-adenosyl-L-methionine-binding site is contributed by Ser-2543. Ser-2543 carries the phosphoserine modification. The active-site For 2'-O-MTase activity is the Lys-2548. The SUMO-interacting motif motif lies at 2564-2567 (VVDL). S-adenosyl-L-methionine contacts are provided by Gly-2573, Trp-2574, Thr-2591, Lys-2592, Asp-2618, and Val-2619. Asp-2633 (for 2'-O-MTase activity) is an active-site residue. Ile-2634 lines the S-adenosyl-L-methionine pocket. Catalysis depends on for 2'-O-MTase activity residues Lys-2668 and Glu-2704. S-adenosyl-L-methionine is bound at residue Tyr-2706. 4 residues coordinate Zn(2+): Glu-2925, His-2929, Cys-2934, and Cys-2937. Residues 3016–3166 (LMYADDTAGW…PLDERFSTSL (151 aa)) enclose the RdRp catalytic domain. Positions 3200, 3216, and 3335 each coordinate Zn(2+).

The protein in the N-terminal section; belongs to the class I-like SAM-binding methyltransferase superfamily. mRNA cap 0-1 NS5-type methyltransferase family. Homodimer. Interacts (via N-terminus) with host EXOC1 (via C-terminus); this interaction results in EXOC1 degradation through the proteasome degradation pathway. In terms of assembly, forms heterodimers with envelope protein E in the endoplasmic reticulum and Golgi. As to quaternary structure, homodimer; in the endoplasmic reticulum and Golgi. Interacts with protein prM. Interacts with non-structural protein 1. Homodimer; Homohexamer when secreted. Interacts with envelope protein E. In terms of assembly, interacts (via N-terminus) with serine protease NS3. As to quaternary structure, forms a heterodimer with serine protease NS3. May form homooligomers. Forms a heterodimer with NS2B. Interacts with NS4B. Interacts with unphosphorylated RNA-directed RNA polymerase NS5; this interaction stimulates RNA-directed RNA polymerase NS5 guanylyltransferase activity. Interacts with host SHFL. In terms of assembly, interacts with host MAVS; this interaction inhibits the synthesis of IFN-beta. Interacts with host SHFL. Interacts with host AUP1; the interaction occurs in the presence of Dengue virus NS4B and induces lipophagy which facilitates production of virus progeny particles. As to quaternary structure, interacts with serine protease NS3. Homodimer. Interacts with host STAT2; this interaction inhibits the phosphorylation of the latter, and, when all viral proteins are present (polyprotein), targets STAT2 for degradation. Interacts with serine protease NS3. Interacts with host PAF1 complex; the interaction may prevent the recruitment of the PAF1 complex to interferon-responsive genes, and thus reduces the immune response. Post-translationally, specific enzymatic cleavages in vivo yield mature proteins. Cleavages in the lumen of endoplasmic reticulum are performed by host signal peptidase, whereas cleavages in the cytoplasmic side are performed by serine protease NS3. Signal cleavage at the 2K-4B site requires a prior NS3 protease-mediated cleavage at the 4A-2K site. In terms of processing, cleaved in post-Golgi vesicles by a host furin, releasing the mature small envelope protein M, and peptide pr. This cleavage is incomplete as up to 30% of viral particles still carry uncleaved prM. N-glycosylated. Post-translationally, N-glycosylated. The excreted form is glycosylated and this is required for efficient secretion of the protein from infected cells. In terms of processing, acetylated by host KAT5. Acetylation modulates NS3 RNA-binding and unwinding activities and plays an important positive role for viral replication. Sumoylation of RNA-directed RNA polymerase NS5 increases NS5 protein stability allowing proper viral RNA replication. Post-translationally, phosphorylated on serines residues. This phosphorylation may trigger NS5 nuclear localization.

It is found in the virion. The protein resides in the host nucleus. Its subcellular location is the host cytoplasm. The protein localises to the host perinuclear region. It localises to the secreted. It is found in the virion membrane. The protein resides in the host endoplasmic reticulum membrane. Its subcellular location is the host mitochondrion. It catalyses the reaction Selective hydrolysis of -Xaa-Xaa-|-Yaa- bonds in which each of the Xaa can be either Arg or Lys and Yaa can be either Ser or Ala.. The catalysed reaction is RNA(n) + a ribonucleoside 5'-triphosphate = RNA(n+1) + diphosphate. The enzyme catalyses a ribonucleoside 5'-triphosphate + H2O = a ribonucleoside 5'-diphosphate + phosphate + H(+). It carries out the reaction ATP + H2O = ADP + phosphate + H(+). It catalyses the reaction a 5'-end (5'-triphosphoguanosine)-ribonucleoside in mRNA + S-adenosyl-L-methionine = a 5'-end (N(7)-methyl 5'-triphosphoguanosine)-ribonucleoside in mRNA + S-adenosyl-L-homocysteine. The catalysed reaction is a 5'-end (N(7)-methyl 5'-triphosphoguanosine)-ribonucleoside in mRNA + S-adenosyl-L-methionine = a 5'-end (N(7)-methyl 5'-triphosphoguanosine)-(2'-O-methyl-ribonucleoside) in mRNA + S-adenosyl-L-homocysteine + H(+). In terms of biological role, plays a role in virus budding by binding to the cell membrane and gathering the viral RNA into a nucleocapsid that forms the core of a mature virus particle. During virus entry, may induce genome penetration into the host cytoplasm after hemifusion induced by the surface proteins. Can migrate to the cell nucleus where it modulates host functions. Overcomes the anti-viral effects of host EXOC1 by sequestering and degrading the latter through the proteasome degradation pathway. Functionally, inhibits RNA silencing by interfering with host Dicer. Prevents premature fusion activity of envelope proteins in trans-Golgi by binding to envelope protein E at pH6.0. After virion release in extracellular space, gets dissociated from E dimers. Its function is as follows. Acts as a chaperone for envelope protein E during intracellular virion assembly by masking and inactivating envelope protein E fusion peptide. prM is the only viral peptide matured by host furin in the trans-Golgi network probably to avoid catastrophic activation of the viral fusion activity in acidic Golgi compartment prior to virion release. prM-E cleavage is inefficient, and many virions are only partially matured. These uncleaved prM would play a role in immune evasion. In terms of biological role, may play a role in virus budding. Exerts cytotoxic effects by activating a mitochondrial apoptotic pathway through M ectodomain. May display a viroporin activity. Functionally, binds to host cell surface receptor and mediates fusion between viral and cellular membranes. Envelope protein is synthesized in the endoplasmic reticulum in the form of heterodimer with protein prM. They play a role in virion budding in the ER, and the newly formed immature particle is covered with 60 spikes composed of heterodimer between precursor prM and envelope protein E. The virion is transported to the Golgi apparatus where the low pH causes dissociation of PrM-E heterodimers and formation of E homodimers. prM-E cleavage is inefficient, and many virions are only partially matured. These uncleaved prM would play a role in immune evasion. Involved in immune evasion, pathogenesis and viral replication. Once cleaved off the polyprotein, is targeted to three destinations: the viral replication cycle, the plasma membrane and the extracellular compartment. Essential for viral replication. Required for formation of the replication complex and recruitment of other non-structural proteins to the ER-derived membrane structures. Excreted as a hexameric lipoparticle that plays a role against host immune response. Antagonizing the complement function. Binds to the host macrophages and dendritic cells. Inhibits signal transduction originating from Toll-like receptor 3 (TLR3). Its function is as follows. Disrupts the host endothelial glycocalyx layer of host pulmonary microvascular endothelial cells, inducing degradation of sialic acid and shedding of heparan sulfate proteoglycans. NS1 induces expression of sialidases, heparanase, and activates cathepsin L, which activates heparanase via enzymatic cleavage. These effects are probably linked to the endothelial hyperpermeability observed in severe dengue disease. In terms of biological role, component of the viral RNA replication complex that functions in virion assembly and antagonizes the host immune response. Functionally, required cofactor for the serine protease function of NS3. May have membrane-destabilizing activity and form viroporins. Displays three enzymatic activities: serine protease, NTPase and RNA helicase. NS3 serine protease, in association with NS2B, performs its autocleavage and cleaves the polyprotein at dibasic sites in the cytoplasm: C-prM, NS2A-NS2B, NS2B-NS3, NS3-NS4A, NS4A-2K and NS4B-NS5. NS3 RNA helicase binds RNA and unwinds dsRNA in the 3' to 5' direction. Its function is as follows. Regulates the ATPase activity of the NS3 helicase activity. NS4A allows NS3 helicase to conserve energy during unwinding. Plays a role in the inhibition of the host innate immune response. Interacts with host MAVS and thereby prevents the interaction between RIGI and MAVS. In turn, IFN-beta production is impaired. Interacts with host AUP1 which mediates induction of lipophagy in host cells and facilitates production of virus progeny particles. In terms of biological role, functions as a signal peptide for NS4B and is required for the interferon antagonism activity of the latter. Functionally, induces the formation of ER-derived membrane vesicles where the viral replication takes place. Inhibits interferon (IFN)-induced host STAT1 phosphorylation and nuclear translocation, thereby preventing the establishment of cellular antiviral state by blocking the IFN-alpha/beta pathway. Replicates the viral (+) and (-) RNA genome, and performs the capping of genomes in the cytoplasm. NS5 methylates viral RNA cap at guanine N-7 and ribose 2'-O positions. Besides its role in RNA genome replication, also prevents the establishment of cellular antiviral state by blocking the interferon-alpha/beta (IFN-alpha/beta) signaling pathway. Inhibits host TYK2 and STAT2 phosphorylation, thereby preventing activation of JAK-STAT signaling pathway. May reduce immune responses by preventing the recruitment of the host PAF1 complex to interferon-responsive genes. In Aedes aegypti (Yellowfever mosquito), this protein is Genome polyprotein.